Reading from the N-terminus, the 101-residue chain is MAPPTRRLLNAALLLLLLLMATSHQPSGTVVARELRCQCLKTLPRVDFENIQSLTVTPPGPHCTQTEVIATLKDGQEVCLNPQAPRLQKIIQKLLKSDKSS.

The N-terminal stretch at 1–32 (MAPPTRRLLNAALLLLLLLMATSHQPSGTVVA) is a signal peptide. Intrachain disulfides connect Cys37/Cys63 and Cys39/Cys79.

This sequence belongs to the intercrine alpha (chemokine CxC) family.

It is found in the secreted. Ligand for CXCR2. Has chemotactic activity for neutrophils. May play a role in inflammation and exert its effects on endothelial cells in an autocrine fashion. The chain is C-X-C motif chemokine 3 (Cxcl3) from Rattus norvegicus (Rat).